A 303-amino-acid polypeptide reads, in one-letter code: Recombination-associated protein RdgC (303 aa).

Belongs to the RdgC family.

The protein localises to the cytoplasm. Its subcellular location is the nucleoid. Functionally, may be involved in recombination. The protein is Recombination-associated protein RdgC of Shewanella sediminis (strain HAW-EB3).